The following is a 120-amino-acid chain: ATP-dependent Clp protease adapter protein ClpS (120 aa).

This sequence belongs to the ClpS family. As to quaternary structure, binds to the N-terminal domain of the chaperone ClpA.

Involved in the modulation of the specificity of the ClpAP-mediated ATP-dependent protein degradation. This Pseudomonas savastanoi pv. phaseolicola (strain 1448A / Race 6) (Pseudomonas syringae pv. phaseolicola (strain 1448A / Race 6)) protein is ATP-dependent Clp protease adapter protein ClpS.